The primary structure comprises 333 residues: Procathepsin L (333 aa).

The N-terminal stretch at 1–17 (MNPTLILAAFCLGIASA) is a signal peptide. A propeptide spans 18-113 (TLTFDHSLEA…KVFQEPLFYE (96 aa)) (activation peptide). Glu122 provides a ligand contact to Zn(2+). Intrachain disulfides connect Cys135/Cys178 and Cys169/Cys211. Cys138 is a catalytic residue. Zn(2+) is bound by residues Glu163, Asp184, Glu199, Glu205, and Glu209. Asn221 is a glycosylation site (N-linked (GlcNAc...) asparagine). Positions 227, 250, 253, 273, and 275 each coordinate Zn(2+). A disulfide bond links Cys269 and Cys322. His276 is an active-site residue. Positions 289 to 291 (ESD) are excised as a propeptide. Asn300 is an active-site residue.

Belongs to the peptidase C1 family. In terms of assembly, dimer of a heavy and a light chain linked by disulfide bonds. Interacts with Long isoform of CD74/Ii chain; the interaction stabilizes the conformation of mature CTSL. Post-translationally, during export along the endocytic pathway, pro-CTSL undergoes several proteolytic cleavages to generate the CTSL single-chain and two-chain mature forms, composed of a heavy chain linked to a light chain by disulfide bonds. Autocleavage; produces the single-chain CTSL after cleavage of the propeptide. The cleavage can be intermolecular.

Its subcellular location is the lysosome. The protein resides in the apical cell membrane. It localises to the cytoplasmic vesicle. The protein localises to the secretory vesicle. It is found in the chromaffin granule. Its subcellular location is the secreted. The protein resides in the extracellular space. It localises to the nucleus. It carries out the reaction Specificity close to that of papain. As compared to cathepsin B, cathepsin L exhibits higher activity toward protein substrates, but has little activity on Z-Arg-Arg-NHMec, and no peptidyl-dipeptidase activity.. Its activity is regulated as follows. Inhibited by the propeptide produced by autocleavage. Long isoform of CD74/Ii chain stabilizes the conformation of mature CTSL by binding to its active site and serving as a chaperone to help maintain a pool of mature enzyme in endocytic compartments and extracellular space of APCs. IFNG enhances the conversion into the CTSL mature and active form. Inhibited by CST6. Inhibited by the glycopeptide antibiotic teicoplanin. Inhibited by amantadine. Thiol protease important for the overall degradation of proteins in lysosomes. Plays a critical for normal cellular functions such as general protein turnover, antigen processing and bone remodeling. Involved in the solubilization of cross-linked TG/thyroglobulin and in the subsequent release of thyroid hormone thyroxine (T4) by limited proteolysis of TG/thyroglobulin in the thyroid follicle lumen. In neuroendocrine chromaffin cells secretory vesicles, catalyzes the prohormone proenkephalin processing to the active enkephalin peptide neurotransmitter. In thymus, regulates CD4(+) T cell positive selection by generating the major histocompatibility complex class II (MHCII) bound peptide ligands presented by cortical thymic epithelial cells. Also mediates invariant chain processing in cortical thymic epithelial cells. Major elastin-degrading enzyme at neutral pH. Accumulates as a mature and active enzyme in the extracellular space of antigen presenting cells (APCs) to regulate degradation of the extracellular matrix in the course of inflammation. Secreted form generates endostatin from COL18A1. Critical for cardiac morphology and function. Plays an important role in hair follicle morphogenesis and cycling, as well as epidermal differentiation. Required for maximal stimulation of steroidogenesis by TIMP1. Functionally, (Microbial infection) In cells lacking TMPRSS2 expression, facilitates human coronaviruses SARS-CoV and SARS-CoV-2 infections via a slow acid-activated route with the proteolysis of coronavirus spike (S) glycoproteins in lysosome for entry into host cell. Proteolysis within lysosomes is sufficient to activate membrane fusion by coronaviruses SARS-CoV and EMC (HCoV-EMC) S as well as Zaire ebolavirus glycoproteins. Its function is as follows. Functions in the regulation of cell cycle progression through proteolytic processing of the CUX1 transcription factor. Translation initiation at downstream start sites allows the synthesis of isoforms that are devoid of a signal peptide and localize to the nucleus where they cleave the CUX1 transcription factor and modify its DNA binding properties. This Homo sapiens (Human) protein is Procathepsin L.